The sequence spans 682 residues: Potassium-transporting ATPase ATP-binding subunit (682 aa).

4 helical membrane-spanning segments follow: residues 34–54 (PVMF…IAMA), 62–82 (ALFS…ANFA), 219–239 (IALT…TATL), and 254–274 (VLVA…LSAI). Aspartate 307 functions as the 4-aspartylphosphate intermediate in the catalytic mechanism. Residues aspartate 344, glutamate 348, 377-384 (FTAQSRMS), and lysine 395 contribute to the ATP site. Mg(2+) contacts are provided by aspartate 518 and aspartate 522. Transmembrane regions (helical) follow at residues 588 to 608 (FAII…LNIM), 616 to 636 (AILS…PLAL), and 656 to 676 (IYGL…DLLL).

It belongs to the cation transport ATPase (P-type) (TC 3.A.3) family. Type IA subfamily. As to quaternary structure, the system is composed of three essential subunits: KdpA, KdpB and KdpC.

It localises to the cell inner membrane. It catalyses the reaction K(+)(out) + ATP + H2O = K(+)(in) + ADP + phosphate + H(+). Part of the high-affinity ATP-driven potassium transport (or Kdp) system, which catalyzes the hydrolysis of ATP coupled with the electrogenic transport of potassium into the cytoplasm. This subunit is responsible for energy coupling to the transport system and for the release of the potassium ions to the cytoplasm. In Escherichia coli O9:H4 (strain HS), this protein is Potassium-transporting ATPase ATP-binding subunit.